A 159-amino-acid chain; its full sequence is MDKPTTSAAAAAAQDSNLLPDSPQHGPTLSSASSFEALTRHDPNLSRLATKMFNKTEEYITHELNAPLEDYKLLEEMNKATIAKYKDMRQIAENLNTSTSELSLKFQQLAPMMQQIDEISDTVDKLEAAAYKLDAYSIALENRVKCVLQRKSGGGQVAQ.

Residues 1-37 (MDKPTTSAAAAAAQDSNLLPDSPQHGPTLSSASSFEA) form a disordered region. Positions 14–36 (QDSNLLPDSPQHGPTLSSASSFE) are enriched in polar residues. Residues 69–134 (EDYKLLEEMN…KLEAAAYKLD (66 aa)) adopt a coiled-coil conformation.

The protein belongs to the BLOC1S2 family. As to quaternary structure, homodimer. Component of the biogenesis of lysosome-related organelles complex-1 (BLOC-1) composed of Blos1, Blos2, Blos3, Blos4, Dysb, Muted, Pldn and Snapin. Interacts with Snapin.

Its function is as follows. Component of the biogenesis of lysosome-related organelles complex-1 (BLOC-1) involved in pigment granule biogenesis. The polypeptide is Biogenesis of lysosome-related organelles complex 1 subunit 2 (Drosophila melanogaster (Fruit fly)).